The sequence spans 189 residues: MSDKIFHNLSGKTLVATPHVITKGIYHKSLIYMLSHTEEGAIGLIFNRLVNHIDLKSFFKIKNDEITTPVMVPIYLGGPVEHEKGFFLHSSDYNKNLLLDFHNDLAVSSNLEISEDIAFGKGPKNSLFIVGYTAWKPGQLEEELETNLWLVMDCNKEFIFADNPESKWHNALKHLGIDEIHFSSQIGNA.

This sequence belongs to the UPF0301 (AlgH) family.

The protein is UPF0301 protein RrIowa_0061 of Rickettsia rickettsii (strain Iowa).